A 341-amino-acid chain; its full sequence is Uroporphyrinogen decarboxylase (341 aa).

Substrate is bound by residues 23 to 27 (RQAGR), Asp73, Tyr147, Ser202, and His318.

The protein belongs to the uroporphyrinogen decarboxylase family. Homodimer.

Its subcellular location is the cytoplasm. The enzyme catalyses uroporphyrinogen III + 4 H(+) = coproporphyrinogen III + 4 CO2. The protein operates within porphyrin-containing compound metabolism; protoporphyrin-IX biosynthesis; coproporphyrinogen-III from 5-aminolevulinate: step 4/4. In terms of biological role, catalyzes the decarboxylation of four acetate groups of uroporphyrinogen-III to yield coproporphyrinogen-III. The sequence is that of Uroporphyrinogen decarboxylase from Erythrobacter litoralis (strain HTCC2594).